Consider the following 126-residue polypeptide: Glycine cleavage system H protein (126 aa).

The region spanning threonine 24–lysine 105 is the Lipoyl-binding domain. At lysine 65 the chain carries N6-lipoyllysine.

Belongs to the GcvH family. In terms of assembly, the glycine cleavage system is composed of four proteins: P, T, L and H. Requires (R)-lipoate as cofactor.

Its function is as follows. The glycine cleavage system catalyzes the degradation of glycine. The H protein shuttles the methylamine group of glycine from the P protein to the T protein. The polypeptide is Glycine cleavage system H protein (Burkholderia ambifaria (strain MC40-6)).